A 373-amino-acid chain; its full sequence is Protodeoxyviolaceinate monooxygenase (373 aa).

Residue 2–20 coordinates FAD; it reads KILVIGAGPAGLVFASQLK.

Requires FAD as cofactor.

The enzyme catalyses protodeoxyviolaceinate + NADH + O2 + H(+) = protoviolaceinate + NAD(+) + H2O. The catalysed reaction is protodeoxyviolaceinate + NADPH + O2 + H(+) = protoviolaceinate + NADP(+) + H2O. It participates in pigment biosynthesis; violacein biosynthesis. Catalyzes the oxygenation of the 6-position of protodeoxyviolaceinate to form proviolacein. This chain is Protodeoxyviolaceinate monooxygenase (vioD), found in Chromobacterium violaceum (strain ATCC 12472 / DSM 30191 / JCM 1249 / CCUG 213 / NBRC 12614 / NCIMB 9131 / NCTC 9757 / MK).